Here is a 532-residue protein sequence, read N- to C-terminus: CTP synthase (532 aa).

The tract at residues 1 to 269 (MNQASTRFIF…DTQILNHFNI (269 aa)) is amidoligase domain. S17 contributes to the CTP binding site. S17 is a UTP binding site. ATP-binding positions include 18–23 (SLGKGL) and D75. Mg(2+) contacts are provided by D75 and E143. Residues 150–152 (DIE), 190–195 (KTKPTQ), and K226 each bind CTP. Residues 190–195 (KTKPTQ) and K226 contribute to the UTP site. Residues 294–532 (NVAIIGKYIK…FISFIKASLD (239 aa)) form the Glutamine amidotransferase type-1 domain. Residue G355 coordinates L-glutamine. C382 functions as the Nucleophile; for glutamine hydrolysis in the catalytic mechanism. L-glutamine contacts are provided by residues 383–386 (MGMQ), E406, and R462. Active-site residues include H509 and E511.

Belongs to the CTP synthase family. In terms of assembly, homotetramer.

The enzyme catalyses UTP + L-glutamine + ATP + H2O = CTP + L-glutamate + ADP + phosphate + 2 H(+). It carries out the reaction L-glutamine + H2O = L-glutamate + NH4(+). It catalyses the reaction UTP + NH4(+) + ATP = CTP + ADP + phosphate + 2 H(+). It functions in the pathway pyrimidine metabolism; CTP biosynthesis via de novo pathway; CTP from UDP: step 2/2. With respect to regulation, allosterically activated by GTP, when glutamine is the substrate; GTP has no effect on the reaction when ammonia is the substrate. The allosteric effector GTP functions by stabilizing the protein conformation that binds the tetrahedral intermediate(s) formed during glutamine hydrolysis. Inhibited by the product CTP, via allosteric rather than competitive inhibition. Functionally, catalyzes the ATP-dependent amination of UTP to CTP with either L-glutamine or ammonia as the source of nitrogen. Regulates intracellular CTP levels through interactions with the four ribonucleotide triphosphates. In Ehrlichia chaffeensis (strain ATCC CRL-10679 / Arkansas), this protein is CTP synthase.